Reading from the N-terminus, the 737-residue chain is Protein OPG064 (737 aa).

Position 1 is an N-acetylmethionine; by host (Met1). Residues Cys496 and Cys535 are joined by a disulfide bond.

This sequence belongs to the orthopoxvirus OPG064 family. As to quaternary structure, interacts with host KLC2; this interaction promotes IEV trafficking by engaging the host kinesin-1 complex. Interacts with protein OPG056/F12. Post-translationally, N-acetylated on initiator methionine by host.

In terms of biological role, plays a role in intracellular enveloped virus (IEV) transport to the cell surface on microtubules. Together with protein OPG056/F12, forms a complex that interacts with host KLC2 (kinesin light chain isoform 2) to engage the kinesin-1 complex and thereby promote IEV trafficking. This Bos taurus (Bovine) protein is Protein OPG064 (OPG064).